The sequence spans 530 residues: Growth-regulating factor 1 (530 aa).

A disordered region spans residues 1–41; it reads MDLGVRVSGHETVSSPGQTELGSGFSNKQERSGFDGEDCWR. Residues 11–27 show a composition bias toward polar residues; the sequence is ETVSSPGQTELGSGFSN. Residues 28–41 show a composition bias toward basic and acidic residues; that stretch reads KQERSGFDGEDCWR. In terms of domain architecture, QLQ spans 133–168; sequence PFSLTQWAELEQQALIYKYITANVPVPSSLLLSLKK. The region spanning 196 to 240 is the WRC domain; sequence DPEPGRCRRTDGKKWRCSRDAVPDQKYCERHINRGRHRSRKPVEG. Short sequence motifs (bipartite nuclear localization signal) lie at residues 201 to 211 and 229 to 236; these read RCRRTDGKKWR and RGRHRSRK. Disordered stretches follow at residues 223–250 and 485–530; these read CERH…NAAA and STFG…APSL. A compositionally biased stretch (low complexity) spans 485 to 508; sequence STFGSLSNSSSASSTIIGDNNNKN. The span at 519–530 shows a compositional bias: polar residues; sequence TLMNTSATAPSL.

The protein belongs to the GRF family. As to quaternary structure, interacts with GIF1 and GIF2. As to expression, strongly expressed in actively growing and developing tissues, such as roots, upper stems, and shoot tips containing the shoot apical meristem (SAM) and flower buds. Also expressed in mature flowers, but weakly expressed in mature stems and leaves.

It is found in the nucleus. Transcription activator that plays a role in the regulation of cell expansion in leaf and cotyledons tissues. Component of a network formed by miR396, the GRFs and their interacting factors (GIFs) acting in the regulation of meristem function, at least partially through the control of cell proliferation. microRNA396-GRF1/GRF3 regulatory module acts as a developmental regulator in the reprogramming of root cells during cyst nematode infection, leading to the formation of the syncytium. This is Growth-regulating factor 1 (GRF1) from Arabidopsis thaliana (Mouse-ear cress).